The following is a 940-amino-acid chain: Pentatricopeptide repeat-containing protein At5g14770, mitochondrial (940 aa).

A mitochondrion-targeting transit peptide spans Met-1–Phe-24. 24 PPR repeats span residues Tyr-59–Pro-93, Asp-94–Pro-129, Asp-130–Ile-161, Asp-162–Pro-196, Asp-197–Thr-231, Asn-241–Pro-259, Asp-260–Pro-294, Asn-295–Val-329, Asp-330–Pro-364, Asn-365–Pro-399, Asn-400–Pro-434, Asn-435–Glu-469, Asn-470–Leu-504, Asp-505–Trp-539, Asp-540–Pro-573, Asp-574–Pro-608, Ser-609–Pro-643, Asn-644–Leu-678, Ser-679–Pro-713, Asp-714–Pro-748, Asn-749–Pro-783, Asp-784–Pro-818, Lys-819–Pro-853, and Asn-854–Lys-891.

Belongs to the PPR family. P subfamily.

Its subcellular location is the mitochondrion. The sequence is that of Pentatricopeptide repeat-containing protein At5g14770, mitochondrial from Arabidopsis thaliana (Mouse-ear cress).